The following is a 362-amino-acid chain: Probable branched-chain-amino-acid aminotransferase (362 aa).

Lysine 202 carries the N6-(pyridoxal phosphate)lysine modification.

The protein belongs to the class-IV pyridoxal-phosphate-dependent aminotransferase family. Pyridoxal 5'-phosphate is required as a cofactor.

It catalyses the reaction L-leucine + 2-oxoglutarate = 4-methyl-2-oxopentanoate + L-glutamate. The enzyme catalyses L-isoleucine + 2-oxoglutarate = (S)-3-methyl-2-oxopentanoate + L-glutamate. The catalysed reaction is L-valine + 2-oxoglutarate = 3-methyl-2-oxobutanoate + L-glutamate. It participates in amino-acid biosynthesis; L-isoleucine biosynthesis; L-isoleucine from 2-oxobutanoate: step 4/4. It functions in the pathway amino-acid biosynthesis; L-leucine biosynthesis; L-leucine from 3-methyl-2-oxobutanoate: step 4/4. Its pathway is amino-acid biosynthesis; L-valine biosynthesis; L-valine from pyruvate: step 4/4. Functionally, acts on leucine, isoleucine and valine. The sequence is that of Probable branched-chain-amino-acid aminotransferase (ilvE) from Streptomyces coelicolor (strain ATCC BAA-471 / A3(2) / M145).